The primary structure comprises 421 residues: NADH-quinone oxidoreductase subunit F 2 (421 aa).

Residue 53-62 (GRGGAGFPTG) coordinates NAD(+). Position 165–212 (165–212 (GAGAYICGEETAMLESLEGKRAQPRLKPPFPAVAGLYASPTVINNVET)) interacts with FMN. Residues cysteine 342, cysteine 345, cysteine 348, and cysteine 388 each contribute to the [4Fe-4S] cluster site.

It belongs to the complex I 51 kDa subunit family. Requires FMN as cofactor. [4Fe-4S] cluster serves as cofactor.

The enzyme catalyses a quinone + NADH + 5 H(+)(in) = a quinol + NAD(+) + 4 H(+)(out). Functionally, NDH-1 shuttles electrons from NADH, via FMN and iron-sulfur (Fe-S) centers, to quinones in the respiratory chain. The immediate electron acceptor for the enzyme in this species is believed to be ubiquinone. Couples the redox reaction to proton translocation (for every two electrons transferred, four hydrogen ions are translocated across the cytoplasmic membrane), and thus conserves the redox energy in a proton gradient. This Rhizobium meliloti (strain 1021) (Ensifer meliloti) protein is NADH-quinone oxidoreductase subunit F 2 (nuoF2).